A 354-amino-acid chain; its full sequence is cAMP-dependent protein kinase catalytic subunit 2 (354 aa).

The 257-residue stretch at 45-301 (YITRAVLGNG…SSDVKSHPWF (257 aa)) folds into the Protein kinase domain. ATP-binding positions include 51–59 (LGNGSFGTV) and lysine 74. Aspartate 168 functions as the Proton acceptor in the catalytic mechanism. Residues 302–354 (QGVDWFGILNQEVTAPYQPTISGAEDLSNFENFEFKDRYKSRINRHPELFANF) enclose the AGC-kinase C-terminal domain.

This sequence belongs to the protein kinase superfamily. AGC Ser/Thr protein kinase family. cAMP subfamily. As to expression, more abundant in adult body than adult head.

It catalyses the reaction L-seryl-[protein] + ATP = O-phospho-L-seryl-[protein] + ADP + H(+). It carries out the reaction L-threonyl-[protein] + ATP = O-phospho-L-threonyl-[protein] + ADP + H(+). The protein is cAMP-dependent protein kinase catalytic subunit 2 (Pka-C2) of Drosophila melanogaster (Fruit fly).